The sequence spans 271 residues: uncharacterized protein (271 aa).

The N-terminal stretch at methionine 1–alanine 22 is a signal peptide.

This is an uncharacterized protein from Sinorhizobium fredii (strain NBRC 101917 / NGR234).